Here is a 2367-residue protein sequence, read N- to C-terminus: Toxin B (2367 aa).

Residues 2 to 91 are four-helical bundle; the sequence is SLVNRKQLEK…EILELKNSNL (90 aa). Residues 96–469 form the GT44 domain; it reads KNLHFIWIGG…YPEANTTITL (374 aa). Residues 96-469 form a glucosyltransferase region region; it reads KNLHFIWIGG…YPEANTTITL (374 aa). UDP-alpha-D-glucose-binding positions include 101 to 103, N139, 269 to 273, and 286 to 288; these read IWI, SDILR, and DVD. Residues D286, D288, and E516 each coordinate Mg(2+). A UDP-alpha-D-glucose-binding site is contributed by 519–521; that stretch reads SLW. The autoprocessing region stretch occupies residues 545–800; it reads GEDDNLDFSQ…KSKNLPELST (256 aa). Positions 546 and 547 each coordinate Zn(2+). Residues 568-775 form the Peptidase C80 domain; that stretch reads SSSTKSSERG…EESIIKDISS (208 aa). The 1D-myo-inositol hexakisphosphate site is built by Y578, K601, and K648. H654 lines the Zn(2+) pocket. The active-site For protease activity is the H654. The active-site Nucleophile; for protease activity is the C699. Residue H758 coordinates Zn(2+). 3 residues coordinate 1D-myo-inositol hexakisphosphate: K765, K776, and K793. The translocation region stretch occupies residues 801–1501; that stretch reads LLQEIRNNSN…VVLIIKVYMD (701 aa). Interaction with host frizzled receptors FZD1, FZD2 and FZD7 regions lie at residues 1434 to 1439, 1487 to 1512, and 1598 to 1600; these read LKTLMA, SELSDVVLIIKVYMDNSKPPFGYYSN, and SLK. 19 Cell wall-binding repeats span residues 1833-1852, 1854-1873, 1876-1895, 1926-1945, 1946-1965, 1967-1986, 1987-2006, 2007-2026, 2057-2076, 2077-2097, 2099-2118, 2119-2138, 2139-2158, 2209-2231, 2233-2252, 2253-2272, 2273-2292, 2323-2342, and 2343-2362; these read VSGLVYINDSLYYFKPPIKN, ITGFTTIGDDKYYFNPDNGG, SVGETIIDGKNYYFSQNGVL, FTGKLIIDENVYYFGDNYRA, AIEWQTLDDEVYYFSTDTGR, FKGLNQIGDDKFYFNSDGIM, QKGFVNINDKTFYFDDSGVM, KSGYTEIDGRYFYFAENGEM, YSGILNFNNKIYYFDDSFTA, VVGWKDLEDGSKYYFDENTAE, SIGISIINDGKYYFNDSGIM, QIGFVTINNEVFYFSDSGIV, ESGMQNIDDNYFYISENGLV, ETGWIYDSENESDKYYFDPEAKK, YKGINVIDDIKYYFDENGIM, RTGLITFEDNHYYFNEDGEM, QYGYLNIEDKMFYFSEDGIM, YTGWLDLDEKRYYFTDEYIA, and ATGSVIIDGEEYYFDPDTAQ. The tract at residues 1835–2367 is receptor-binding (CROPS) region; the sequence is GLVYINDSLY…PDTAQLVISE (533 aa).

Belongs to the clostridial glucosylating toxin (LCGT) family. Interacts with host FZD1. Interacts with host FZD2; interaction promotes toxin entry into host cell and occupies the binding site for Wnt-adducted palmitoleate in FZD2, leading to prevent Wnt-binding and downstream Wnt signaling. Interacts with host FZD7. Interacts with host CSPG4. Interacts with host NECTIN3/PVRL3. It depends on Zn(2+) as a cofactor. The cofactor is Mn(2+). Requires Mg(2+) as cofactor. In terms of processing, undergoes autocatalytic cleavage to release the N-terminal part (Glucosyltransferase TcdB), which constitutes the active part of the toxin, in the host cytosol. 1D-myo-inositol hexakisphosphate-binding (InsP6) activates the peptidase C80 domain and promotes autoprocessing.

The protein resides in the secreted. The protein localises to the host endosome membrane. Its subcellular location is the host cytoplasm. It is found in the host cytosol. It localises to the host cell membrane. The catalysed reaction is L-threonyl-[protein] + UDP-alpha-D-glucose = 3-O-(alpha-D-glucosyl)-L-threonyl-[protein] + UDP + H(+). Its activity is regulated as follows. Protease activity is activated upon binding to 1D-myo-inositol hexakisphosphate (InsP6), which induces conformational reorganization. In terms of biological role, precursor of a cytotoxin that targets and disrupts the colonic epithelium, inducing the host inflammatory and innate immune responses and resulting in diarrhea and pseudomembranous colitis. TcdB constitutes the main toxin that mediates the pathology of C.difficile infection, an opportunistic pathogen that colonizes the colon when the normal gut microbiome is disrupted. Compared to TcdA, TcdB is more virulent and more important for inducing the host inflammatory and innate immune responses. This form constitutes the precursor of the toxin: it enters into host cells and mediates autoprocessing to release the active toxin (Glucosyltransferase TcdB) into the host cytosol. Targets colonic epithelia by binding to the frizzled receptors FZD1, FZD2 and FZD7, and enters host cells via clathrin-mediated endocytosis. Frizzled receptors constitute the major host receptors in the colonic epithelium, but other receptors, such as CSPG4 or NECTIN3/PVRL3, have been identified. Binding to carbohydrates and sulfated glycosaminoglycans on host cell surface also contribute to entry into cells. Once entered into host cells, acidification in the endosome promotes the membrane insertion of the translocation region and formation of a pore, leading to translocation of the GT44 and peptidase C80 domains across the endosomal membrane. This activates the peptidase C80 domain and autocatalytic processing, releasing the N-terminal part (Glucosyltransferase TcdB), which constitutes the active part of the toxin, in the cytosol. Functionally, active form of the toxin, which is released into the host cytosol following autoprocessing and inactivates small GTPases. Acts by mediating monoglucosylation of small GTPases of the Rho family (Rac1, RhoA, RhoB, RhoC, RhoG and Cdc42) in host cells at the conserved threonine residue located in the switch I region ('Thr-37/35'), using UDP-alpha-D-glucose as the sugar donor. Monoglucosylation of host small GTPases completely prevents the recognition of the downstream effector, blocking the GTPases in their inactive form, leading to actin cytoskeleton disruption and cell death, resulting in the loss of colonic epithelial barrier function. This Clostridioides difficile (Peptoclostridium difficile) protein is Toxin B.